We begin with the raw amino-acid sequence, 79 residues long: Acyl carrier protein (79 aa).

The 76-residue stretch at 2–77 (STIEERVKKI…QAIDYVKSHV (76 aa)) folds into the Carrier domain. An O-(pantetheine 4'-phosphoryl)serine modification is found at Ser-37.

It belongs to the acyl carrier protein (ACP) family. Post-translationally, 4'-phosphopantetheine is transferred from CoA to a specific serine of apo-ACP by AcpS. This modification is essential for activity because fatty acids are bound in thioester linkage to the sulfhydryl of the prosthetic group.

The protein localises to the cytoplasm. The protein operates within lipid metabolism; fatty acid biosynthesis. Its function is as follows. Carrier of the growing fatty acid chain in fatty acid biosynthesis. This chain is Acyl carrier protein, found in Xanthomonas oryzae pv. oryzae (strain MAFF 311018).